Consider the following 393-residue polypeptide: Mitogen-activated protein kinase homolog NTF4 (393 aa).

Positions 1-32 are disordered; that stretch reads MDGPAHQTDTVMSDAAGQQPAPPSQPVAGIDN. The 286-residue stretch at 60-345 folds into the Protein kinase domain; sequence KPPIMPIGKG…VEDALAHPYL (286 aa). ATP contacts are provided by residues 66–74 and Lys89; that span reads IGKGAYGIV. Asp186 acts as the Proton acceptor in catalysis. Residue Thr218 is modified to Phosphothreonine. A TXY motif is present at residues 218–220; it reads TEY. At Tyr220 the chain carries Phosphotyrosine.

The protein belongs to the protein kinase superfamily. CMGC Ser/Thr protein kinase family. MAP kinase subfamily. Mg(2+) is required as a cofactor. In terms of processing, dually phosphorylated on Thr-218 and Tyr-220, which activates the enzyme. Very low autophosphorylation, although dramatically increased when Mn(2+) is added to the reaction instead of Mg(2+).

It catalyses the reaction L-seryl-[protein] + ATP = O-phospho-L-seryl-[protein] + ADP + H(+). The enzyme catalyses L-threonyl-[protein] + ATP = O-phospho-L-threonyl-[protein] + ADP + H(+). With respect to regulation, activated by tyrosine and threonine phosphorylation. The polypeptide is Mitogen-activated protein kinase homolog NTF4 (NTF4) (Nicotiana tabacum (Common tobacco)).